A 123-amino-acid chain; its full sequence is Large ribosomal subunit protein uL14 (123 aa).

This sequence belongs to the universal ribosomal protein uL14 family. As to quaternary structure, part of the 50S ribosomal subunit. Forms a cluster with proteins L3 and L19. In the 70S ribosome, L14 and L19 interact and together make contacts with the 16S rRNA in bridges B5 and B8.

Functionally, binds to 23S rRNA. Forms part of two intersubunit bridges in the 70S ribosome. The sequence is that of Large ribosomal subunit protein uL14 from Actinobacillus succinogenes (strain ATCC 55618 / DSM 22257 / CCUG 43843 / 130Z).